Reading from the N-terminus, the 925-residue chain is Translation initiation factor IF-2 (925 aa).

Positions Pro190 to Val329 are disordered. 3 stretches are compositionally biased toward pro residues: residues Pro199 to Ala209, Pro217 to Arg238, and Arg279 to Gln288. The span at Thr289–Gly307 shows a compositional bias: low complexity. Residues Arg320 to Val329 are compositionally biased toward basic and acidic residues. Residues Val417–Glu589 form the tr-type G domain. The segment at Gly426–Thr433 is G1. Gly426–Thr433 is a binding site for GTP. A G2 region spans residues Gly451–His455. Residues Asp476–Gly479 are G3. Residues Asp476–His480 and Asn530–Asp533 contribute to the GTP site. The interval Asn530–Asp533 is G4. Residues Ser566 to Lys568 form a G5 region.

It belongs to the TRAFAC class translation factor GTPase superfamily. Classic translation factor GTPase family. IF-2 subfamily.

The protein resides in the cytoplasm. One of the essential components for the initiation of protein synthesis. Protects formylmethionyl-tRNA from spontaneous hydrolysis and promotes its binding to the 30S ribosomal subunits. Also involved in the hydrolysis of GTP during the formation of the 70S ribosomal complex. This chain is Translation initiation factor IF-2, found in Gloeobacter violaceus (strain ATCC 29082 / PCC 7421).